We begin with the raw amino-acid sequence, 486 residues long: MSKVTKQSKSHKSSELVSLAEKIKQKALENRKQSREESQATEEANTASETEAAVIEETAEPEEGFSSFRELDLVPELIEACDNLNFTKPTPIQSKAIPPALQGKDIIGLAQTGSGKTAAFAIPILNRLWHDQQPYYACILAPTRELAQQIKETFDSLGSLMGVRTTCIVGGMNMMDQARDLMRKPHIIIATPGRLMDHLENTKGFALRKLQFLVMDEADRLLDMEFGPVLDRILKNIPTKGRTTYLFSATMTSKIDKLQRASLTNPVKCAVSNKYQTVDTLVQTLIVVPGGLKNTFLIYLLNEFIGKTTIVFTRTKANAERISGLCNLLEFSATALHGDLNQNQRTGALDLFKAGKKSILVATDVAARGLDIPSVDLVINYDIPVDSKSYIHRVGRTARAGRSGKSVSLVSQYDLELILRIEEVLGKKLPKENVDKSIVLSLRDSVDKANGEVIMELNRRNKEKQTRGKGRRSRTATRENMDKEEE.

The span at methionine 1–histidine 11 shows a compositional bias: basic residues. The interval methionine 1–alanine 52 is disordered. Residues valine 17–glutamate 49 are a coiled coil. Over residues glutamate 21–serine 38 the composition is skewed to basic and acidic residues. Low complexity predominate over residues threonine 41 to alanine 52. Residues serine 66–serine 94 carry the Q motif motif. A Helicase ATP-binding domain is found at isoleucine 97–cysteine 269. Alanine 110–threonine 117 provides a ligand contact to ATP. The short motif at aspartate 216–aspartate 219 is the DEAD box element. Positions leucine 300–valine 446 constitute a Helicase C-terminal domain. Residues arginine 459–glutamate 486 form a disordered region. Basic and acidic residues predominate over residues alanine 476–glutamate 486.

This sequence belongs to the DEAD box helicase family. DDX47/RRP3 subfamily. Interacts with the SSU processome.

It is found in the nucleus. It catalyses the reaction ATP + H2O = ADP + phosphate + H(+). In terms of biological role, ATP-dependent rRNA helicase required for pre-ribosomal RNA processing. Involved in the maturation of the 35S-pre-rRNA and to its cleavage to mature 18S rRNA. This is ATP-dependent rRNA helicase RRP3 from Eremothecium gossypii (strain ATCC 10895 / CBS 109.51 / FGSC 9923 / NRRL Y-1056) (Yeast).